Consider the following 673-residue polypeptide: UvrABC system protein B (673 aa).

The Helicase ATP-binding domain occupies 26–183 (EGLEDGLAHQ…RRLAELQYTR (158 aa)). Position 39 to 46 (39 to 46 (GVTGSGKT)) interacts with ATP. The Beta-hairpin motif lies at 92–115 (YYDYYQPEAYVPSSDTFIEKDASV). In terms of domain architecture, Helicase C-terminal spans 431–597 (QVDDLLSEIR…GLNKKVVDIL (167 aa)). One can recognise a UVR domain in the interval 633-668 (QQKIHELEGQMMQHAQNLEFEEAAEIRDQLHQLREL).

Belongs to the UvrB family. In terms of assembly, forms a heterotetramer with UvrA during the search for lesions. Interacts with UvrC in an incision complex.

It localises to the cytoplasm. The UvrABC repair system catalyzes the recognition and processing of DNA lesions. A damage recognition complex composed of 2 UvrA and 2 UvrB subunits scans DNA for abnormalities. Upon binding of the UvrA(2)B(2) complex to a putative damaged site, the DNA wraps around one UvrB monomer. DNA wrap is dependent on ATP binding by UvrB and probably causes local melting of the DNA helix, facilitating insertion of UvrB beta-hairpin between the DNA strands. Then UvrB probes one DNA strand for the presence of a lesion. If a lesion is found the UvrA subunits dissociate and the UvrB-DNA preincision complex is formed. This complex is subsequently bound by UvrC and the second UvrB is released. If no lesion is found, the DNA wraps around the other UvrB subunit that will check the other stand for damage. The sequence is that of UvrABC system protein B from Citrobacter koseri (strain ATCC BAA-895 / CDC 4225-83 / SGSC4696).